We begin with the raw amino-acid sequence, 234 residues long: MKHTGGSLPMYMQIAEMLVREVAAGRLIDGEKLAPERDMAADLGIAVGTLRKSLAELQERGLLERVQGSGNYIRAVSDPQSVYAFFRLELIEGGGLPTAEVLDVARLAKPADLPAFGTSTEGHRIRRLRRIAGKPAAIEEIWLDGSYVDTITIENMSESLYLYYRTRLNLWISKAEDRIDLGDVPEWAPEVFGQKAGSSVPRVLRLSQAQDGAVAEVSWTWFDHTVARYVSRIR.

The region spanning 8 to 76 is the HTH gntR-type domain; sequence LPMYMQIAEM…QGSGNYIRAV (69 aa). Residues 36-55 constitute a DNA-binding region (H-T-H motif); it reads ERDMAADLGIAVGTLRKSLA.

The protein localises to the cytoplasm. Its function is as follows. Probably regulates expression of genes involved in the sulfoquinovose monooxygenase (sulfo-SMO) pathway (smoABCDEFGHI). The sequence is that of HTH-type transcriptional regulator SmoD from Agrobacterium fabrum (strain C58 / ATCC 33970) (Agrobacterium tumefaciens (strain C58)).